Reading from the N-terminus, the 221-residue chain is ATP-dependent dethiobiotin synthetase BioD (221 aa).

An ATP-binding site is contributed by 12–17; sequence EVGKTV. Residue Thr-16 participates in Mg(2+) binding. Lys-39 is an active-site residue. Thr-43 provides a ligand contact to substrate. ATP contacts are provided by residues Asp-47, 105–108, and 165–166; these read EGLG and SC. 2 residues coordinate Mg(2+): Asp-47 and Glu-105.

It belongs to the dethiobiotin synthetase family. Homodimer. The cofactor is Mg(2+).

The protein localises to the cytoplasm. The enzyme catalyses (7R,8S)-7,8-diammoniononanoate + CO2 + ATP = (4R,5S)-dethiobiotin + ADP + phosphate + 3 H(+). It carries out the reaction (7R,8S)-8-amino-7-(carboxyamino)nonanoate + ATP = (4R,5S)-dethiobiotin + ADP + phosphate + H(+). It functions in the pathway cofactor biosynthesis; biotin biosynthesis; biotin from 7,8-diaminononanoate: step 1/2. Catalyzes a mechanistically unusual reaction, the ATP-dependent insertion of CO2 between the N7 and N8 nitrogen atoms of 7,8-diaminopelargonic acid (DAPA, also called 7,8-diammoniononanoate) to form a ureido ring. This cyanobacterium does not encode bioA (which catalyzes the formation of the precursor for this reaction in the cannonical pathway), instead it encodes bioU, which replaces bioA and also performs the first half of the cannonical BioD reaction. Thus in this organism BioD has a different substrate. The chain is ATP-dependent dethiobiotin synthetase BioD from Crocosphaera subtropica (strain ATCC 51142 / BH68) (Cyanothece sp. (strain ATCC 51142)).